The chain runs to 957 residues: Glycine dehydrogenase (decarboxylating) 2 (957 aa).

Position 707 is an N6-(pyridoxal phosphate)lysine (lysine 707).

This sequence belongs to the GcvP family. In terms of assembly, the glycine cleavage system is composed of four proteins: P, T, L and H. The cofactor is pyridoxal 5'-phosphate.

It carries out the reaction N(6)-[(R)-lipoyl]-L-lysyl-[glycine-cleavage complex H protein] + glycine + H(+) = N(6)-[(R)-S(8)-aminomethyldihydrolipoyl]-L-lysyl-[glycine-cleavage complex H protein] + CO2. In terms of biological role, the glycine cleavage system catalyzes the degradation of glycine. The P protein binds the alpha-amino group of glycine through its pyridoxal phosphate cofactor; CO(2) is released and the remaining methylamine moiety is then transferred to the lipoamide cofactor of the H protein. The chain is Glycine dehydrogenase (decarboxylating) 2 (gcvP2) from Pseudomonas putida (strain ATCC 47054 / DSM 6125 / CFBP 8728 / NCIMB 11950 / KT2440).